The following is a 205-amino-acid chain: Allergen Asp f 15 homolog (205 aa).

Belongs to the cerato-platanin family.

The protein resides in the secreted. The polypeptide is Allergen Asp f 15 homolog (Arthroderma benhamiae (strain ATCC MYA-4681 / CBS 112371) (Trichophyton mentagrophytes)).